Here is a 511-residue protein sequence, read N- to C-terminus: ILIALLCTLPFLFFLKKWRRSYSGKTPPPSPPKLPVLGNLHQLGTFPHRSLQSLSRRYGPVMQLHFGSVPVLVASSPEAAREIMKNQDLNFSNRPNLSIPRRLLYDNHDVAFAPYGEYWRQIRSICVLQLLSNKRVQSFRRVREEETSIMVEKIMQLQKTTPTAAVNLTDLLTCLTNDVFCRIALGKKYGGTTTGDGEYHVRSLKKNLAEFYVLLGISPLWEYIPWLEWTRRFDGVDRRIEEVSRTFDEFLGKVIQEHRVRDKREDTTVVGDTVGLDFVDLLLQFQRENERSSSPVDDLTIKAVILDMFLAGTDTTVTALEWALSELIKNPRAMKILQKEVRGVAGSKGEIEESDLEKMPYLKAVMKESLRLHAPVPLLVPRESTRDTKVLGYDVASGTRVLINCWAIGRDSSVWEESETFLPERFLETSIDYRGMHFELIPFGSGRRGCPGATFAAAIDELALATLVHKFDFKLPNGVRVEDLDMSEGSGFTIHKKFPLLVVPTPHACTS.

Transmembrane regions (helical) follow at residues 1–15 and 61–77; these read ILIA…LFFL and VMQL…ASSP. N-linked (GlcNAc...) asparagine glycans are attached at residues Asn90, Asn96, and Asn167. Cys450 serves as a coordination point for heme.

Belongs to the cytochrome P450 family. Requires heme as cofactor.

Its subcellular location is the membrane. This is Cytochrome P450 71A6 (CYP71A6) from Nepeta racemosa (Catmint).